A 490-amino-acid chain; its full sequence is Betaine aldehyde dehydrogenase (490 aa).

Ser26, Ile27, and Asp93 together coordinate K(+). Residue 150 to 152 participates in NAD(+) binding; it reads GAW. The Charge relay system role is filled by Lys162. NAD(+)-binding positions include 176–179 and 230–233; these read KPSE and GVET. Leu246 lines the K(+) pocket. Glu252 acts as the Proton acceptor in catalysis. Positions 254, 286, and 387 each coordinate NAD(+). Cys286 functions as the Nucleophile in the catalytic mechanism. The residue at position 286 (Cys286) is a Cysteine sulfenic acid (-SOH). Residues Lys457 and Gly460 each coordinate K(+). The active-site Charge relay system is Glu464.

It belongs to the aldehyde dehydrogenase family. In terms of assembly, dimer of dimers. Requires K(+) as cofactor.

The catalysed reaction is betaine aldehyde + NAD(+) + H2O = glycine betaine + NADH + 2 H(+). Its pathway is amine and polyamine biosynthesis; betaine biosynthesis via choline pathway; betaine from betaine aldehyde: step 1/1. Involved in the biosynthesis of the osmoprotectant glycine betaine. Catalyzes the irreversible oxidation of betaine aldehyde to the corresponding acid. In Acinetobacter baumannii (strain SDF), this protein is Betaine aldehyde dehydrogenase.